The following is an 867-amino-acid chain: Prominin-1 (867 aa).

Positions 1–19 are cleaved as a signal peptide; it reads MALVFSALLLLGLCGKISS. Residues 20 to 107 are Extracellular-facing; it reads EGQPAFHNTP…VLALKIALYE (88 aa). A helical transmembrane segment spans residues 108-128; that stretch reads IGVLICAILGLLFIILMPLVG. Residues 129–158 lie on the Cytoplasmic side of the membrane; it reads CFFCMCRCCNKCGGEMHQRQKQNAPCRRKC. Residues 159 to 179 traverse the membrane as a helical segment; it reads LGLSLLVICLLMSLGIIYGFV. The Extracellular segment spans residues 180–434; it reads ANQQTRTRIK…LPKLEEYDSY (255 aa). N6-acetyllysine occurs at positions 226, 258, and 265. Asparagine 273, asparagine 291, asparagine 332, asparagine 374, and asparagine 415 each carry an N-linked (GlcNAc...) asparagine glycan. The chain crosses the membrane as a helical span at residues 435–455; the sequence is WWLGGLIVCFLLTLIVTFFFL. Residues 456–487 are Cytoplasmic-facing; sequence GLLCGVFGYDKHATPTRRGCVSNTGGIFLMAG. The chain crosses the membrane as a helical span at residues 488–508; sequence VGFGFLFCWILMILVVLTFVV. Topologically, residues 509–794 are extracellular; sequence GANVEKLLCE…LCGYVADPLN (286 aa). N-linked (GlcNAc...) asparagine glycans are attached at residues asparagine 554, asparagine 581, and asparagine 732. A helical transmembrane segment spans residues 795 to 815; that stretch reads LFWFGIGKATVLLLPAVIIAI. The Cytoplasmic segment spans residues 816–867; sequence KLAKYYRRMDSEDVYDDVETVPMKNLEIGSNGYHKDHLYGVHNPVMTSPSRY. Serine 865 is modified (phosphoserine).

This sequence belongs to the prominin family. As to quaternary structure, interacts with CDHR1 and with actin filaments. Interacts with NAT8 and NAT8B. Post-translationally, acetylation at Lys-226, Lys-258 and Lys-265 by NAT8 and NAT8B may control PROM1 protein expression and its function in cell apoptosis. In terms of tissue distribution, in the submandibular gland, expressed on the apical side of epithelial cells. In the parotid gland, expressed in the intercalated ducts. In the sublingual gland, expressed in intercalated ducts. In the extraorbital lacrimal gland, expressed in the intercalated tubules and larger intralobular ducts. Expressed in the retina. Present in urine within small membrane particles (at protein level). In the embryo, expressed on the apical side of neuroepithelial cells and of other epithelia such as lung buds, gut and ureter buds. In the adult, expressed at the apical side of the kidney tubules and of the ependymal layer of the brain. Not expressed in gut, liver, lung, pituitary, adrenal, heart or spleen. Localized to the nascent disk membranes at the base of the rod outer segment in the retina (at protein level).

Its subcellular location is the apical cell membrane. It is found in the cell projection. The protein localises to the microvillus membrane. The protein resides in the cilium. It localises to the photoreceptor outer segment. Its subcellular location is the endoplasmic reticulum. It is found in the endoplasmic reticulum-Golgi intermediate compartment. Its function is as follows. May play a role in cell differentiation, proliferation and apoptosis. Binds cholesterol in cholesterol-containing plasma membrane microdomains and may play a role in the organization of the apical plasma membrane in epithelial cells. During early retinal development acts as a key regulator of disk morphogenesis. Involved in regulation of MAPK and Akt signaling pathways. In neuroblastoma cells suppresses cell differentiation such as neurite outgrowth in a RET-dependent manner. In Mus musculus (Mouse), this protein is Prominin-1 (Prom1).